The chain runs to 283 residues: Pantothenate synthetase (283 aa).

26 to 33 (MGNLHEGH) provides a ligand contact to ATP. Catalysis depends on H33, which acts as the Proton donor. (R)-pantoate is bound at residue Q57. Q57 provides a ligand contact to beta-alanine. 144 to 147 (GKKD) provides a ligand contact to ATP. Q150 serves as a coordination point for (R)-pantoate. Residues V173 and 181-184 (LSSR) each bind ATP.

This sequence belongs to the pantothenate synthetase family. As to quaternary structure, homodimer.

The protein resides in the cytoplasm. The enzyme catalyses (R)-pantoate + beta-alanine + ATP = (R)-pantothenate + AMP + diphosphate + H(+). It participates in cofactor biosynthesis; (R)-pantothenate biosynthesis; (R)-pantothenate from (R)-pantoate and beta-alanine: step 1/1. In terms of biological role, catalyzes the condensation of pantoate with beta-alanine in an ATP-dependent reaction via a pantoyl-adenylate intermediate. This is Pantothenate synthetase from Ralstonia pickettii (strain 12J).